We begin with the raw amino-acid sequence, 635 residues long: DNA-directed RNA polymerase subunit gamma (635 aa).

Zn(2+)-binding residues include Cys74, Cys76, Cys89, and Cys92. Mg(2+)-binding residues include Asp471, Asp473, and Asp475.

Belongs to the RNA polymerase beta' chain family. RpoC1 subfamily. As to quaternary structure, in cyanobacteria the RNAP catalytic core is composed of 2 alpha, 1 beta, 1 beta', 1 gamma and 1 omega subunit. When a sigma factor is associated with the core the holoenzyme is formed, which can initiate transcription. Requires Mg(2+) as cofactor. Zn(2+) serves as cofactor.

It catalyses the reaction RNA(n) + a ribonucleoside 5'-triphosphate = RNA(n+1) + diphosphate. DNA-dependent RNA polymerase catalyzes the transcription of DNA into RNA using the four ribonucleoside triphosphates as substrates. The polypeptide is DNA-directed RNA polymerase subunit gamma (Prochlorococcus marinus (strain NATL2A)).